Here is a 339-residue protein sequence, read N- to C-terminus: Longiborneol synthase CLM1 (339 aa).

Residues 1–17 (MLATPTLSNFDKPSLPS) show a composition bias toward polar residues. Positions 1–21 (MLATPTLSNFDKPSLPSSEGG) are disordered. Residues aspartate 112, asparagine 241, serine 245, and glutamate 249 each contribute to the Mg(2+) site. The NDXXSXXXE magnesium-binding motif signature appears at 241 to 249 (NDVLSFYKE).

It belongs to the trichodiene synthase family. Requires Mg(2+) as cofactor. The cofactor is Mn(2+).

The enzyme catalyses (2E,6E)-farnesyl diphosphate + H2O = (-)-longiborneol + diphosphate. The protein operates within mycotoxin biosynthesis. In terms of biological role, terpene cyclase involved in the biosynthesis of culmorin, a tricyclic sesquiterpene diol reported to have antifungal activity and some phytotoxicity to wheat coleoptile tissue, contributing to Fusarium head blight disease. The terpene cyclase CLM1 is responsible for the cyclization of farnesyl diphosphate into the intermediate longiborneol. Longiborneol is then hydroxylated in a regio- and endo-stereoselective manner at position C-11 by the cytochrome P450 monooxygenase CLM2 to produce culmorin. Additional non-specific oxygenases are also able to hydroxylate longiborneol at other sites than C-11 leading to 3-hydroxylongiborneol, 5-hydroxylongiborneol, 12-hydroxylongiborneol and 15-hydroxylongiborneol. Moreover, another oxygenase capable of installing a C-11 exo-hydroxy group in longiborneol can also yield 11-epi-acetylculmorin. The production of these longiborneol derivatives is dwarfed by the high abundance of culmorin, suggesting that CLM2 displays superior enzymatic activity to the unidentified, possibly promiscuous, additional oxygenases. This Gibberella zeae (strain ATCC MYA-4620 / CBS 123657 / FGSC 9075 / NRRL 31084 / PH-1) (Wheat head blight fungus) protein is Longiborneol synthase CLM1.